The chain runs to 206 residues: Isochorismatase family protein 1B (206 aa).

This sequence belongs to the isochorismatase family.

In Dictyostelium discoideum (Social amoeba), this protein is Isochorismatase family protein 1B.